The following is a 115-amino-acid chain: T cell receptor beta variable 12-5 (115 aa).

A signal peptide spans 1-21 (MATRLLCCVVLCLLGEELIDA). One can recognise an Ig-like domain in the interval 22 to 115 (RVTQTPRHKV…SAVYFCASGL (94 aa)). The cysteines at positions 42 and 111 are disulfide-linked.

As to quaternary structure, alpha-beta TR is a heterodimer composed of an alpha and beta chain; disulfide-linked. The alpha-beta TR is associated with the transmembrane signaling CD3 coreceptor proteins to form the TR-CD3 (TcR or TCR). The assembly of alpha-beta TR heterodimers with CD3 occurs in the endoplasmic reticulum where a single alpha-beta TR heterodimer associates with one CD3D-CD3E heterodimer, one CD3G-CD3E heterodimer and one CD247 homodimer forming a stable octameric structure. CD3D-CD3E and CD3G-CD3E heterodimers preferentially associate with TR alpha and TR beta chains, respectively. The association of the CD247 homodimer is the last step of TcR assembly in the endoplasmic reticulum and is required for transport to the cell surface.

The protein localises to the cell membrane. In terms of biological role, v region of the variable domain of T cell receptor (TR) beta chain that participates in the antigen recognition. Alpha-beta T cell receptors are antigen specific receptors which are essential to the immune response and are present on the cell surface of T lymphocytes. Recognize peptide-major histocompatibility (MH) (pMH) complexes that are displayed by antigen presenting cells (APC), a prerequisite for efficient T cell adaptive immunity against pathogens. Binding of alpha-beta TR to pMH complex initiates TR-CD3 clustering on the cell surface and intracellular activation of LCK that phosphorylates the ITAM motifs of CD3G, CD3D, CD3E and CD247 enabling the recruitment of ZAP70. In turn ZAP70 phosphorylates LAT, which recruits numerous signaling molecules to form the LAT signalosome. The LAT signalosome propagates signal branching to three major signaling pathways, the calcium, the mitogen-activated protein kinase (MAPK) kinase and the nuclear factor NF-kappa-B (NF-kB) pathways, leading to the mobilization of transcription factors that are critical for gene expression and essential for T cell growth and differentiation. The T cell repertoire is generated in the thymus, by V-(D)-J rearrangement. This repertoire is then shaped by intrathymic selection events to generate a peripheral T cell pool of self-MH restricted, non-autoaggressive T cells. Post-thymic interaction of alpha-beta TR with the pMH complexes shapes TR structural and functional avidity. This chain is T cell receptor beta variable 12-5, found in Homo sapiens (Human).